A 496-amino-acid polypeptide reads, in one-letter code: UDP-N-acetylmuramate--L-alanine ligase (496 aa).

Residue 122-128 (GTHGKTT) participates in ATP binding.

This sequence belongs to the MurCDEF family.

The protein localises to the cytoplasm. It catalyses the reaction UDP-N-acetyl-alpha-D-muramate + L-alanine + ATP = UDP-N-acetyl-alpha-D-muramoyl-L-alanine + ADP + phosphate + H(+). It participates in cell wall biogenesis; peptidoglycan biosynthesis. Functionally, cell wall formation. The sequence is that of UDP-N-acetylmuramate--L-alanine ligase from Mycobacterium avium (strain 104).